The following is a 185-amino-acid chain: TATA-box-binding protein 3 (185 aa).

2 tandem repeats follow at residues I7–L84 and V100–F178.

The protein belongs to the TBP family.

General factor that plays a role in the activation of archaeal genes transcribed by RNA polymerase. Binds specifically to the TATA box promoter element which lies close to the position of transcription initiation. This is TATA-box-binding protein 3 from Methanosarcina acetivorans (strain ATCC 35395 / DSM 2834 / JCM 12185 / C2A).